A 204-amino-acid polypeptide reads, in one-letter code: MARGPRYKVPRRRRREGKTNYYKRYTMALSRKPRFVVRKSNKYVWVQVIEFAPEGDKVIAAAHSKELEKKYGWKGYGNSLPAVYLTGMLAALRAKKAGIQYAVPDIGLHKPTKGARVFAAIKAANDVGLEVPVGDVVPDESRIRGEHIASYAESLKNENPEEYQRRFAKLLERGLKPEDYPKHFEEVKAKILEDYKVEQPATTG.

It belongs to the universal ribosomal protein uL18 family. In terms of assembly, part of the 50S ribosomal subunit. Contacts the 5S and 23S rRNAs.

This is one of the proteins that bind and probably mediate the attachment of the 5S RNA into the large ribosomal subunit, where it forms part of the central protuberance. This chain is Large ribosomal subunit protein uL18, found in Ignicoccus hospitalis (strain KIN4/I / DSM 18386 / JCM 14125).